A 262-amino-acid polypeptide reads, in one-letter code: Abhydrolase domain-containing protein AKT2 (262 aa).

Positions 260–262 (SKL) match the Peroxisomal targeting signal type 1 motif.

It belongs to the AB hydrolase superfamily. AKT2 hydrolase family.

The protein resides in the peroxisome. It functions in the pathway mycotoxin biosynthesis. Its function is as follows. Abhydrolase domain-containing protein; part of the gene clusters that mediate the biosynthesis of the host-selective toxins (HSTs) AK-toxins responsible for Japanese pear black spot disease by the Japanese pear pathotype. AK-toxins are esters of 9,10-epoxy 8-hydroxy 9-methyldecatrienoic acid (EDA). On cellular level, AK-toxins affect plasma membrane of susceptible cells and cause a sudden increase in loss of K(+) after a few minutes of toxin treatment. The acyl-CoA ligase AKT1, the hydrolase AKT2 and enoyl-CoA hydratase AKT3 are all involved in the biosynthesis of the AK-, AF- and ACT-toxin common 9,10-epoxy-8-hydroxy-9-methyl-decatrienoic acid (EDA) structural moiety. Part of the EDA biosynthesis occurs in the peroxisome since these 3 enzymes are localized in peroxisomes. The exact roles of the 3 enzymes, as well as of additional AK-toxin clusters enzymes, including AKT4, AKT6 and AKTS1, have still to be elucidated. The Cytochrome P450 monooxygenase AKT7 on the other side functions to limit production of EDA and AK-toxin, probably via the catalysis of a side reaction of EDA or its precursor. This is Abhydrolase domain-containing protein AKT2 from Alternaria alternata (Alternaria rot fungus).